A 270-amino-acid chain; its full sequence is Gap junction beta-3 protein (270 aa).

Residues 1 to 20 (MDWKTLQALLSGVNKYSTAF) are Cytoplasmic-facing. A helical membrane pass occupies residues 21–40 (GRIWLSVVFVFRVLVYVVAA). The Extracellular segment spans residues 41-75 (ERVWGDEQKDFDCNTKQPGCTNVCYDNYFPISNIR). A helical membrane pass occupies residues 76–98 (LWALQLIFVTCPSLLVILHVAYR). At 99-126 (EERERRHRQKHGDQCAKLYDNAGKKHGG) the chain is on the cytoplasmic side. The chain crosses the membrane as a helical span at residues 127–149 (LWWTYLFSLIFKLIIEFLFLYLL). At 150–187 (HTLWHGFNMPRLVQCANVAPCPNIVDCYIARPTEKKIF) the chain is on the extracellular side. The helical transmembrane segment at 188-210 (TYFMVGASAVCIVLTICELCYLI) threads the bilayer. At 211 to 270 (CHRVLRGLHKDKPRGGCSPSSSASRASTCRCHHKLVEAGEVDPDPGNNKLQASAPNLTPI) the chain is on the cytoplasmic side. A disordered region spans residues 250–270 (EVDPDPGNNKLQASAPNLTPI). Polar residues predominate over residues 258–270 (NKLQASAPNLTPI).

The protein belongs to the connexin family. Beta-type (group I) subfamily. As to quaternary structure, a connexon is composed of a hexamer of connexins. Interacts with CNST.

Its subcellular location is the cell membrane. It localises to the cell junction. The protein localises to the gap junction. Functionally, one gap junction consists of a cluster of closely packed pairs of transmembrane channels, the connexons, through which materials of low MW diffuse from one cell to a neighboring cell. This Homo sapiens (Human) protein is Gap junction beta-3 protein (GJB3).